The following is a 556-amino-acid chain: Formate--tetrahydrofolate ligase 1 (556 aa).

65–72 (TPAGEGKS) provides a ligand contact to ATP.

It belongs to the formate--tetrahydrofolate ligase family.

It carries out the reaction (6S)-5,6,7,8-tetrahydrofolate + formate + ATP = (6R)-10-formyltetrahydrofolate + ADP + phosphate. It functions in the pathway one-carbon metabolism; tetrahydrofolate interconversion. This chain is Formate--tetrahydrofolate ligase 1, found in Streptococcus pyogenes serotype M2 (strain MGAS10270).